Reading from the N-terminus, the 453-residue chain is Chromosomal replication initiator protein DnaA (453 aa).

Positions 1 to 79 are domain I, interacts with DnaA modulators; the sequence is MKSLIQEKWN…KTAIAEVINQ (79 aa). Positions 79-111 are domain II; it reads QDFEIEFVLLSQTKAEEKVQTQAPNKIKNESLS. Residues 112-330 are domain III, AAA+ region; it reads YLNPRYTFDT…GALTKIVALS (219 aa). ATP-binding residues include Gly156, Gly158, Lys159, and Thr160. The tract at residues 331–453 is domain IV, binds dsDNA; it reads RLKKKEVDVI…VLIKKINPTP (123 aa).

The protein belongs to the DnaA family. As to quaternary structure, oligomerizes as a right-handed, spiral filament on DNA at oriC.

The protein localises to the cytoplasm. In terms of biological role, plays an essential role in the initiation and regulation of chromosomal replication. ATP-DnaA binds to the origin of replication (oriC) to initiate formation of the DNA replication initiation complex once per cell cycle. Binds the DnaA box (a 9 base pair repeat at the origin) and separates the double-stranded (ds)DNA. Forms a right-handed helical filament on oriC DNA; dsDNA binds to the exterior of the filament while single-stranded (ss)DNA is stabiized in the filament's interior. The ATP-DnaA-oriC complex binds and stabilizes one strand of the AT-rich DNA unwinding element (DUE), permitting loading of DNA polymerase. After initiation quickly degrades to an ADP-DnaA complex that is not apt for DNA replication. Binds acidic phospholipids. In Lachnoclostridium phytofermentans (strain ATCC 700394 / DSM 18823 / ISDg) (Clostridium phytofermentans), this protein is Chromosomal replication initiator protein DnaA.